Consider the following 71-residue polypeptide: Pro-MCH (71 aa).

The signal sequence occupies residues A1–G20.

The protein belongs to the melanin-concentrating hormone family.

The protein resides in the secreted. In Carlito syrichta (Philippine tarsier), this protein is Pro-MCH (PMCH).